The primary structure comprises 328 residues: Phosphatidylglycerol--prolipoprotein diacylglyceryl transferase (328 aa).

The next 3 helical transmembrane spans lie at 15-35 (VIQGIPITWYSLSYILIILIS), 57-77 (IFMFSLVLGAILGGRLASTLV), and 106-126 (GMAIHGGFLGAIIAPLITINT). Position 156 (Arg-156) interacts with a 1,2-diacyl-sn-glycero-3-phospho-(1'-sn-glycerol). The next 2 helical transmembrane spans lie at 242-262 (GFIFGVYVMLYAFFRFFIEYL) and 289-309 (ISMGQILSLTLMLSGLIWIIV).

It belongs to the Lgt family.

The protein localises to the cell inner membrane. It carries out the reaction L-cysteinyl-[prolipoprotein] + a 1,2-diacyl-sn-glycero-3-phospho-(1'-sn-glycerol) = an S-1,2-diacyl-sn-glyceryl-L-cysteinyl-[prolipoprotein] + sn-glycerol 1-phosphate + H(+). It participates in protein modification; lipoprotein biosynthesis (diacylglyceryl transfer). Catalyzes the transfer of the diacylglyceryl group from phosphatidylglycerol to the sulfhydryl group of the N-terminal cysteine of a prolipoprotein, the first step in the formation of mature lipoproteins. This chain is Phosphatidylglycerol--prolipoprotein diacylglyceryl transferase, found in Borreliella burgdorferi (strain ZS7) (Borrelia burgdorferi).